Consider the following 356-residue polypeptide: Protein pelota homolog (356 aa).

It belongs to the eukaryotic release factor 1 family. Pelota subfamily. In terms of assembly, monomer. A divalent metal cation serves as cofactor.

Its subcellular location is the cytoplasm. In terms of biological role, may function in recognizing stalled ribosomes, interact with stem-loop structures in stalled mRNA molecules, and effect endonucleolytic cleavage of the mRNA. May play a role in the release non-functional ribosomes and degradation of damaged mRNAs. Has endoribonuclease activity. In Pyrococcus furiosus (strain ATCC 43587 / DSM 3638 / JCM 8422 / Vc1), this protein is Protein pelota homolog.